The sequence spans 988 residues: Exportin-T (988 aa).

The protein belongs to the exportin family. In terms of tissue distribution, expressed in young leaves, growing leaf blades, young floral organs and root tips.

The protein localises to the nucleus. Its subcellular location is the cytoplasm. In terms of biological role, probable tRNA nucleus export receptor which regulates tRNA processing and facilitates tRNA translocation across the nuclear pore complex. Is required for proper activity of the shoot apical meristem (SAM) and correct leaf initiation at different developmental stages, and may play a role in floral patterning. The protein is Exportin-T (PSD) of Arabidopsis thaliana (Mouse-ear cress).